A 545-amino-acid polypeptide reads, in one-letter code: 2-succinyl-5-enolpyruvyl-6-hydroxy-3-cyclohexene-1-carboxylate synthase (545 aa).

Belongs to the TPP enzyme family. MenD subfamily. Homodimer. Mg(2+) is required as a cofactor. Requires Mn(2+) as cofactor. The cofactor is thiamine diphosphate.

The catalysed reaction is isochorismate + 2-oxoglutarate + H(+) = 5-enolpyruvoyl-6-hydroxy-2-succinyl-cyclohex-3-ene-1-carboxylate + CO2. It functions in the pathway quinol/quinone metabolism; 1,4-dihydroxy-2-naphthoate biosynthesis; 1,4-dihydroxy-2-naphthoate from chorismate: step 2/7. Its pathway is quinol/quinone metabolism; menaquinone biosynthesis. Catalyzes the thiamine diphosphate-dependent decarboxylation of 2-oxoglutarate and the subsequent addition of the resulting succinic semialdehyde-thiamine pyrophosphate anion to isochorismate to yield 2-succinyl-5-enolpyruvyl-6-hydroxy-3-cyclohexene-1-carboxylate (SEPHCHC). The protein is 2-succinyl-5-enolpyruvyl-6-hydroxy-3-cyclohexene-1-carboxylate synthase of Nocardia farcinica (strain IFM 10152).